The sequence spans 398 residues: MANKFRTLDDVDVKGKRVLLRVDLNVPMENGRVTDATRLERVAPTITELADKGGKVILLAHFGRPKGRDAKESLKPVTEALSKVLNKPVAFADDCIGEPAATAVAALKDGDILCLENTRFHKEEEKNDPAFVAELAKLGDIWVNDAFSAAHRAHASTEGLGHKLPAYAGRTMQAELDALEKALGSPTKPVIAIIGGAKVSTKIDLLENLVSKVDALVIGGGMANTFLHAQGVGIGKSLAEKDLAPTALRIIEKAEAANCAIILPVDATVAYHFAANAPSHAYGLDAIPADGMILDVGPQSVARVHAAIDDAATLVWNGPLGAFEMQPFDRGTVAAAKHAAERTKAKKLISIAGGGDTVAALNQAHVAGDFTYVSTAGGAFLEWMEGKPLPGVEVLRIK.

Residues 23-25, arginine 38, 61-64, arginine 119, and arginine 152 contribute to the substrate site; these read DLN and HFGR. ATP-binding positions include lysine 202, glutamate 324, and 354 to 357; that span reads GGDT.

The protein belongs to the phosphoglycerate kinase family. As to quaternary structure, monomer.

The protein localises to the cytoplasm. The enzyme catalyses (2R)-3-phosphoglycerate + ATP = (2R)-3-phospho-glyceroyl phosphate + ADP. It participates in carbohydrate degradation; glycolysis; pyruvate from D-glyceraldehyde 3-phosphate: step 2/5. The protein is Phosphoglycerate kinase of Bradyrhizobium diazoefficiens (strain JCM 10833 / BCRC 13528 / IAM 13628 / NBRC 14792 / USDA 110).